Consider the following 363-residue polypeptide: Cyanuric acid amidohydrolase (363 aa).

Residues 1–103 (MKTRVTRLTV…LVFEVDDSAP (103 aa)) form an RU A region. Residues R51 and 82–83 (SG) contribute to the substrate site. The tract at residues 111–247 (GLAAGVAFTR…NEVLVLGNAP (137 aa)) is RU B. K161 is a catalytic residue. Substrate is bound by residues R193 and 230–231 (SA). Residue S230 is the Nucleophile of the active site. Residues 253–363 (YRIGHAVMED…GGPLALIVRS (111 aa)) form an RU C region. E297 serves as a coordination point for Mg(2+). Substrate-binding positions include R324 and 343–344 (SG). Mg(2+) is bound by residues A346, Q349, G350, P351, and G354.

Belongs to the cyclic amide hydrolase (CyAH) family. In terms of assembly, homotetramer.

It catalyses the reaction cyanurate + H2O = 1-carboxybiuret + H(+). The protein operates within xenobiotic degradation; atrazine degradation; biuret from cyanurate: step 1/1. Its activity is regulated as follows. Inhibited by barbituric acid. In terms of biological role, responsible for the hydrolysis of cyanuric acid, an intermediate formed during catabolism of s-triazine based compounds in herbicides such as atrazine and polymers such as melamine. Catalyzes the hydrolytic opening of the s-triazine ring of cyanuric acid (2,4,6-trihydroxy-s-triazine) to yield carbon dioxide and carboxybiuret, which spontaneously decarboxylates to biuret. The chain is Cyanuric acid amidohydrolase from Ectopseudomonas oleovorans (strain CECT 5344) (Pseudomonas pseudoalcaligenes).